The sequence spans 115 residues: Large ribosomal subunit protein bL35m (115 aa).

Belongs to the bacterial ribosomal protein bL35 family.

Its subcellular location is the mitochondrion. The chain is Large ribosomal subunit protein bL35m from Saccharomyces cerevisiae (strain YJM789) (Baker's yeast).